We begin with the raw amino-acid sequence, 177 residues long: Large ribosomal subunit protein uL6 (177 aa).

The protein belongs to the universal ribosomal protein uL6 family. As to quaternary structure, part of the 50S ribosomal subunit.

This protein binds to the 23S rRNA, and is important in its secondary structure. It is located near the subunit interface in the base of the L7/L12 stalk, and near the tRNA binding site of the peptidyltransferase center. The chain is Large ribosomal subunit protein uL6 from Pseudomonas paraeruginosa (strain DSM 24068 / PA7) (Pseudomonas aeruginosa (strain PA7)).